The following is a 314-amino-acid chain: 2,3-dihydroxyphenylpropionate/2,3-dihydroxicinnamic acid 1,2-dioxygenase (314 aa).

H115 acts as the Proton donor in catalysis. Residue H179 is the Proton acceptor of the active site.

The protein belongs to the LigB/MhpB extradiol dioxygenase family. As to quaternary structure, homotetramer. The cofactor is Fe(2+).

The enzyme catalyses 3-(2,3-dihydroxyphenyl)propanoate + O2 = (2Z,4E)-2-hydroxy-6-oxonona-2,4-dienedioate + H(+). It carries out the reaction (2E)-3-(2,3-dihydroxyphenyl)prop-2-enoate + O2 = (2Z,4E,7E)-2-hydroxy-6-oxonona-2,4,7-trienedioate + H(+). The protein operates within aromatic compound metabolism; 3-phenylpropanoate degradation. Its function is as follows. Catalyzes the non-heme iron(II)-dependent oxidative cleavage of 2,3-dihydroxyphenylpropionic acid and 2,3-dihydroxicinnamic acid into 2-hydroxy-6-ketononadienedioate and 2-hydroxy-6-ketononatrienedioate, respectively. This Escherichia coli O157:H7 protein is 2,3-dihydroxyphenylpropionate/2,3-dihydroxicinnamic acid 1,2-dioxygenase.